The primary structure comprises 433 residues: Pyrimidine-nucleoside phosphorylase (433 aa).

81-83 (KHS) serves as a coordination point for phosphate. The K(+) site is built by Gly88 and Thr90. Residues Thr92, 108 to 110 (KMS), and Thr120 contribute to the phosphate site. The substrate site is built by Arg168 and Lys187. K(+)-binding residues include Leu243, Ala246, and Glu255.

This sequence belongs to the thymidine/pyrimidine-nucleoside phosphorylase family. Homodimer. The cofactor is K(+).

The catalysed reaction is uridine + phosphate = alpha-D-ribose 1-phosphate + uracil. The enzyme catalyses thymidine + phosphate = 2-deoxy-alpha-D-ribose 1-phosphate + thymine. It carries out the reaction 2'-deoxyuridine + phosphate = 2-deoxy-alpha-D-ribose 1-phosphate + uracil. Its function is as follows. Catalyzes phosphorolysis of the pyrimidine nucleosides uridine, thymidine and 2'-deoxyuridine with the formation of the corresponding pyrimidine base and ribose-1-phosphate. The chain is Pyrimidine-nucleoside phosphorylase (pdp) from Staphylococcus aureus (strain bovine RF122 / ET3-1).